A 400-amino-acid chain; its full sequence is Peptidase M20 domain-containing protein C757.05c (400 aa).

Residues 1-25 form the signal peptide; the sequence is MTMKISVWSLLIVIGYHLWMSPVLA. Asn-80 carries N-linked (GlcNAc...) asparagine glycosylation. Asp-152 contributes to the Zn(2+) binding site. The active-site Proton acceptor is Glu-186. Glu-187 lines the Zn(2+) pocket.

Belongs to the peptidase M20A family. Zn(2+) serves as cofactor.

Its subcellular location is the secreted. This chain is Peptidase M20 domain-containing protein C757.05c, found in Schizosaccharomyces pombe (strain 972 / ATCC 24843) (Fission yeast).